A 92-amino-acid chain; its full sequence is Costars family protein ST45-2 (92 aa).

N-acetylmethionine is present on Met-1.

The protein belongs to the costars family.

The polypeptide is Costars family protein ST45-2 (Eutrema halophilum (Salt cress)).